Consider the following 182-residue polypeptide: Isopentenyl-diphosphate Delta-isomerase (182 aa).

Mn(2+) contacts are provided by H25 and H32. Residues 30 to 164 (LLHLAFSSWL…PWAFSPWMVM (135 aa)) form the Nudix hydrolase domain. Residue C67 is part of the active site. H69 provides a ligand contact to Mn(2+). A Mg(2+)-binding site is contributed by E87. The Mn(2+) site is built by E114 and E116. The active site involves E116.

This sequence belongs to the IPP isomerase type 1 family. In terms of assembly, homodimer. The cofactor is Mg(2+). Mn(2+) is required as a cofactor.

Its subcellular location is the cytoplasm. It carries out the reaction isopentenyl diphosphate = dimethylallyl diphosphate. The protein operates within isoprenoid biosynthesis; dimethylallyl diphosphate biosynthesis; dimethylallyl diphosphate from isopentenyl diphosphate: step 1/1. Its function is as follows. Catalyzes the 1,3-allylic rearrangement of the homoallylic substrate isopentenyl (IPP) to its highly electrophilic allylic isomer, dimethylallyl diphosphate (DMAPP). In Escherichia coli O45:K1 (strain S88 / ExPEC), this protein is Isopentenyl-diphosphate Delta-isomerase.